The primary structure comprises 506 residues: ATP synthase subunit alpha (506 aa).

171–178 (GDRQTGKT) serves as a coordination point for ATP.

The protein belongs to the ATPase alpha/beta chains family. As to quaternary structure, F-type ATPases have 2 components, CF(1) - the catalytic core - and CF(0) - the membrane proton channel. CF(1) has five subunits: alpha(3), beta(3), gamma(1), delta(1), epsilon(1). CF(0) has four main subunits: a, b, b' and c.

The protein localises to the cellular thylakoid membrane. The enzyme catalyses ATP + H2O + 4 H(+)(in) = ADP + phosphate + 5 H(+)(out). Produces ATP from ADP in the presence of a proton gradient across the membrane. The alpha chain is a regulatory subunit. In Nostoc punctiforme (strain ATCC 29133 / PCC 73102), this protein is ATP synthase subunit alpha.